The sequence spans 469 residues: Diaminobutyrate--2-oxoglutarate transaminase (469 aa).

N6-(pyridoxal phosphate)lysine is present on K290.

This sequence belongs to the class-III pyridoxal-phosphate-dependent aminotransferase family. It depends on pyridoxal 5'-phosphate as a cofactor.

Its subcellular location is the cytoplasm. It carries out the reaction L-2,4-diaminobutanoate + 2-oxoglutarate = L-aspartate 4-semialdehyde + L-glutamate. Functionally, involved in the degradation of ectoine, which allows H.elongata to utilize ectoine as both a carbon and a nitrogen source for growth. Probably catalyzes the conversion of L-2,4-diaminobutyrate (DABA) to L-aspartate beta-semialdehyde (ASA) by transamination with 2-oxoglutarate. This Halomonas elongata (strain ATCC 33173 / DSM 2581 / NBRC 15536 / NCIMB 2198 / 1H9) protein is Diaminobutyrate--2-oxoglutarate transaminase.